Reading from the N-terminus, the 217-residue chain is Nucleolar protein 12 (217 aa).

Positions 34 to 98 form a coiled coil; sequence GFHKRKVERK…LVTAKTESVQ (65 aa). Positions 122-217 are disordered; sequence LGLPLPEQGD…MTGKARHNGE (96 aa). Residues 130–141 are compositionally biased toward acidic residues; that stretch reads GDQDGSQEEEMS. Basic residues-rich tracts occupy residues 172-184 and 201-217; these read AHSR…KHPR and KTQR…HNGE.

This sequence belongs to the RRP17 family. As to quaternary structure, interacts with KIAA1191. As to expression, expressed in brain, lung, spleen, kidney and heart.

The protein resides in the nucleus. It is found in the nucleolus. It localises to the cytoplasm. In terms of biological role, multifunctional RNA binding protein that plays a role in RNA metabolism and DNA maintenance. Participates in the resolution of DNA stress and the maintenance of genome integrity by localizing to sites of DNA insults. Also plays a role in proper nucleolar organization by limiting nucleolar size and regulating nucleolar number. Mechanistically, regulates the nucleolar levels of fibrillarin and nucleolin, two key players in pre-rRNA processing and ribosome assembly. This chain is Nucleolar protein 12 (Nol12), found in Mus musculus (Mouse).